The primary structure comprises 226 residues: SURF1-like protein (226 aa).

2 helical membrane passes run T3–S23 and L199–Y219.

This sequence belongs to the SURF1 family.

Its subcellular location is the cell membrane. In Rickettsia felis (strain ATCC VR-1525 / URRWXCal2) (Rickettsia azadi), this protein is SURF1-like protein.